Consider the following 239-residue polypeptide: Fatty acid metabolism regulator protein (239 aa).

The HTH gntR-type domain occupies 6–74 (QSPAGFAEEY…HGKPTKVNNF (69 aa)). A DNA-binding region (H-T-H motif) is located at residues 34–53 (ERELSELIGVTRTTLREVLQ).

Homodimer.

Its subcellular location is the cytoplasm. Multifunctional regulator of fatty acid metabolism. In Escherichia fergusonii (strain ATCC 35469 / DSM 13698 / CCUG 18766 / IAM 14443 / JCM 21226 / LMG 7866 / NBRC 102419 / NCTC 12128 / CDC 0568-73), this protein is Fatty acid metabolism regulator protein.